The chain runs to 403 residues: 3-oxoacyl-[acyl-carrier-protein] synthase 2 (403 aa).

The region spanning 1-403 is the Ketosynthase family 3 (KS3) domain; it reads VITGMGALSP…GGHNAVLVFK (403 aa). Residues Cys-158, His-297, and His-334 each act as for beta-ketoacyl synthase activity in the active site.

Belongs to the thiolase-like superfamily. Beta-ketoacyl-ACP synthases family.

It carries out the reaction a fatty acyl-[ACP] + malonyl-[ACP] + H(+) = a 3-oxoacyl-[ACP] + holo-[ACP] + CO2. The enzyme catalyses (9Z)-hexadecenoyl-[ACP] + malonyl-[ACP] + H(+) = 3-oxo-(11Z)-octadecenoyl-[ACP] + holo-[ACP] + CO2. It functions in the pathway lipid metabolism; fatty acid biosynthesis. Functionally, involved in the type II fatty acid elongation cycle. Catalyzes the elongation of a wide range of acyl-ACP by the addition of two carbons from malonyl-ACP to an acyl acceptor. Can efficiently catalyze the conversion of palmitoleoyl-ACP (cis-hexadec-9-enoyl-ACP) to cis-vaccenoyl-ACP (cis-octadec-11-enoyl-ACP), an essential step in the thermal regulation of fatty acid composition. This chain is 3-oxoacyl-[acyl-carrier-protein] synthase 2 (fabF), found in Staphylococcus aureus.